The primary structure comprises 386 residues: Probable mannan endo-1,4-beta-mannosidase A (386 aa).

The signal sequence occupies residues 1–21; sequence MKLNPSLLTAAGLVSAQLASA. Substrate contacts are provided by Trp-95 and Asn-207. The Proton donor role is filled by Glu-208. A substrate-binding site is contributed by Tyr-283. The active-site Nucleophile is Glu-316. Residue Asn-336 is glycosylated (N-linked (GlcNAc...) asparagine). Trp-346 provides a ligand contact to substrate.

The protein belongs to the glycosyl hydrolase 5 (cellulase A) family.

Its subcellular location is the secreted. It carries out the reaction Random hydrolysis of (1-&gt;4)-beta-D-mannosidic linkages in mannans, galactomannans and glucomannans.. In terms of biological role, endo-1,4-mannanase, a crucial enzyme for depolymerization of seed galactomannans and wood galactoglucomannans. The polypeptide is Probable mannan endo-1,4-beta-mannosidase A (manA) (Aspergillus oryzae (strain ATCC 42149 / RIB 40) (Yellow koji mold)).